We begin with the raw amino-acid sequence, 78 residues long: Large ribosomal subunit protein bL28 (78 aa).

Belongs to the bacterial ribosomal protein bL28 family.

This is Large ribosomal subunit protein bL28 from Prochlorococcus marinus (strain MIT 9312).